Here is a 521-residue protein sequence, read N- to C-terminus: GMP synthase [glutamine-hydrolyzing] (521 aa).

The 193-residue stretch at 5–197 (KILILDFGSQ…VLDICGAQPG (193 aa)) folds into the Glutamine amidotransferase type-1 domain. The active-site Nucleophile is C81. Active-site residues include H171 and E173. The GMPS ATP-PPase domain occupies 198 to 390 (WTMPNYIEEA…LGLPREMVYR (193 aa)). 225–231 (SGGVDSS) lines the ATP pocket.

Homodimer.

It catalyses the reaction XMP + L-glutamine + ATP + H2O = GMP + L-glutamate + AMP + diphosphate + 2 H(+). The protein operates within purine metabolism; GMP biosynthesis; GMP from XMP (L-Gln route): step 1/1. Catalyzes the synthesis of GMP from XMP. This Neisseria gonorrhoeae (strain ATCC 700825 / FA 1090) protein is GMP synthase [glutamine-hydrolyzing].